The primary structure comprises 464 residues: Protein FAM90A20 (464 aa).

Disordered regions lie at residues 16-42 (RAQT…DPRL), 71-213 (ATLG…IPRP), 228-247 (PTHS…ASKT), 254-273 (VRTQ…CPSA), 309-389 (RLGP…HDGA), and 418-437 (EKPG…SEAP). Composition is skewed to basic and acidic residues over residues 74-83 (GKKEGKENLK) and 97-114 (NKDK…DPQR). Residues 180–197 (LASLSPLRKASLSSSSSL) are compositionally biased toward low complexity.

This sequence belongs to the FAM90 family.

This is Protein FAM90A20 from Homo sapiens (Human).